Reading from the N-terminus, the 175-residue chain is Large ribosomal subunit protein uL10 (175 aa).

This sequence belongs to the universal ribosomal protein uL10 family. As to quaternary structure, part of the ribosomal stalk of the 50S ribosomal subunit. The N-terminus interacts with L11 and the large rRNA to form the base of the stalk. The C-terminus forms an elongated spine to which L12 dimers bind in a sequential fashion forming a multimeric L10(L12)X complex.

In terms of biological role, forms part of the ribosomal stalk, playing a central role in the interaction of the ribosome with GTP-bound translation factors. The sequence is that of Large ribosomal subunit protein uL10 from Prochlorococcus marinus (strain NATL1A).